The primary structure comprises 79 residues: ATP synthase subunit c (79 aa).

The next 2 helical transmembrane spans lie at 11–31 (ISAAIIMGFASIGAAIGIGIL) and 55–75 (IVMGLVDAIPMISVGLGLYLI).

The protein belongs to the ATPase C chain family. As to quaternary structure, F-type ATPases have 2 components, F(1) - the catalytic core - and F(0) - the membrane proton channel. F(1) has five subunits: alpha(3), beta(3), gamma(1), delta(1), epsilon(1). F(0) has three main subunits: a(1), b(2) and c(10-14). The alpha and beta chains form an alternating ring which encloses part of the gamma chain. F(1) is attached to F(0) by a central stalk formed by the gamma and epsilon chains, while a peripheral stalk is formed by the delta and b chains.

The protein localises to the cell membrane. In terms of biological role, f(1)F(0) ATP synthase produces ATP from ADP in the presence of a proton or sodium gradient. F-type ATPases consist of two structural domains, F(1) containing the extramembraneous catalytic core and F(0) containing the membrane proton channel, linked together by a central stalk and a peripheral stalk. During catalysis, ATP synthesis in the catalytic domain of F(1) is coupled via a rotary mechanism of the central stalk subunits to proton translocation. Its function is as follows. Key component of the F(0) channel; it plays a direct role in translocation across the membrane. A homomeric c-ring of between 10-14 subunits forms the central stalk rotor element with the F(1) delta and epsilon subunits. This Wigglesworthia glossinidia brevipalpis protein is ATP synthase subunit c.